A 281-amino-acid chain; its full sequence is Release factor glutamine methyltransferase (281 aa).

Residues 121–125 (GSGTG), Asp-144, and Asn-188 contribute to the S-adenosyl-L-methionine site. 188–191 (NPPY) is a binding site for substrate.

The protein belongs to the protein N5-glutamine methyltransferase family. PrmC subfamily.

It catalyses the reaction L-glutaminyl-[peptide chain release factor] + S-adenosyl-L-methionine = N(5)-methyl-L-glutaminyl-[peptide chain release factor] + S-adenosyl-L-homocysteine + H(+). Functionally, methylates the class 1 translation termination release factors RF1/PrfA and RF2/PrfB on the glutamine residue of the universally conserved GGQ motif. The chain is Release factor glutamine methyltransferase from Aquifex aeolicus (strain VF5).